The primary structure comprises 400 residues: S-adenosylmethionine synthase (400 aa).

136–141 (GQGSVD) is a binding site for ATP.

Belongs to the AdoMet synthase 2 family. Mg(2+) serves as cofactor.

It carries out the reaction L-methionine + ATP + H2O = S-adenosyl-L-methionine + phosphate + diphosphate. It functions in the pathway amino-acid biosynthesis; S-adenosyl-L-methionine biosynthesis; S-adenosyl-L-methionine from L-methionine: step 1/1. In terms of biological role, catalyzes the formation of S-adenosylmethionine from methionine and ATP. The polypeptide is S-adenosylmethionine synthase (Thermoplasma volcanium (strain ATCC 51530 / DSM 4299 / JCM 9571 / NBRC 15438 / GSS1)).